The primary structure comprises 526 residues: Glucose-6-phosphate isomerase (526 aa).

E343 functions as the Proton donor in the catalytic mechanism. Catalysis depends on residues H374 and K494.

It belongs to the GPI family.

Its subcellular location is the cytoplasm. It catalyses the reaction alpha-D-glucose 6-phosphate = beta-D-fructose 6-phosphate. The protein operates within carbohydrate biosynthesis; gluconeogenesis. It participates in carbohydrate degradation; glycolysis; D-glyceraldehyde 3-phosphate and glycerone phosphate from D-glucose: step 2/4. In terms of biological role, catalyzes the reversible isomerization of glucose-6-phosphate to fructose-6-phosphate. The protein is Glucose-6-phosphate isomerase of Dechloromonas aromatica (strain RCB).